The following is a 629-amino-acid chain: MEKNQQSTAEQYSEQIEQLMELGRTQGYLTFAEINDLLPEDAIDPEYYDKLLQTLQNDAGIPVLDEAPESDDMMLSDTIPDEDAVEEATQILSNVESEIGRTTDPVRMYMREMGTVDLLTREDEISIAKRIEGGIDEVQTSISAYPEALNGLLKNYDDVEKGNFRLTDLITGFVDPNAEIEEHNGLDEDFSDEDDEEESSNADVEDNEDEEDNESESTSDSSDSDNSIDPEVAREKFQQLREQHSKTLAVIEKHGRSGKRAQDQIALLGEIFKQFRLVPKQFDLLVLSMKEMMKRVRYQERQLQKILVDIAGMPKDDFEKIITTNGSNSEWVAKALKSSKPWAKRLIKYEDRIYEALNNLAITEENTKLTITQMRDICDAVARGEQKARRAKKEMVEANLRLVISIAKKYTNRGLQFLDLIQEGNIGLMKAVDKFEYRRGYKFSTYATWWIRQAITRSIADQARTIRIPVHMIETINKLNRISRQLLQEMGREATPEELAERMGMPEDKIRKVLKIAKEPISMETPIGDDDDSHLGDFIEDSTLELPLDSATAQSLKVATHEVLEGLTPREAKVLRMRFGIDMNTDHTLEEVGKQFDVTRERIRQIEAKALRKLRHPSRSETLRSFLDE.

Residues 183 to 228 (HNGLDEDFSDEDDEEESSNADVEDNEDEEDNESESTSDSSDSDNSI) form a disordered region. Residues 187 to 228 (DEDFSDEDDEEESSNADVEDNEDEEDNESESTSDSSDSDNSI) are compositionally biased toward acidic residues. The sigma-70 factor domain-2 stretch occupies residues 395 to 465 (MVEANLRLVI…TRSIADQART (71 aa)). Positions 419–422 (DLIQ) match the Interaction with polymerase core subunit RpoC motif. The interval 474–550 (ETINKLNRIS…DSTLELPLDS (77 aa)) is sigma-70 factor domain-3. Residues 563–616 (VLEGLTPREAKVLRMRFGIDMNTDHTLEEVGKQFDVTRERIRQIEAKALRKLRH) form a sigma-70 factor domain-4 region. Positions 589 to 608 (LEEVGKQFDVTRERIRQIEA) form a DNA-binding region, H-T-H motif.

The protein belongs to the sigma-70 factor family. RpoD/SigA subfamily. In terms of assembly, interacts transiently with the RNA polymerase catalytic core.

It is found in the cytoplasm. In terms of biological role, sigma factors are initiation factors that promote the attachment of RNA polymerase to specific initiation sites and are then released. This sigma factor is the primary sigma factor during exponential growth. The protein is RNA polymerase sigma factor RpoD of Haemophilus influenzae (strain ATCC 51907 / DSM 11121 / KW20 / Rd).